The sequence spans 335 residues: Phosphatidylcholine:ceramide cholinephosphotransferase 2 (335 aa).

Helical transmembrane passes span 60–80 (LTAF…LTVI), 104–124 (WSVG…IIFL), 136–156 (FLLG…TFLP), 200–220 (ILCG…MYFV), and 229–249 (LVIL…ALVV). His210 is an active-site residue. Residues His253 and Asp257 contribute to the active site. A helical membrane pass occupies residues 258–278 (VLIAYWLTSHVFWSYHQIFEM). Over 279-335 (RKDDRPQAPLSRLWWFWLCYWFESDVADGKLVNKWNWPLEGPQRMHTIMNRINYKLQ) the chain is Cytoplasmic.

It belongs to the sphingomyelin synthase family.

It localises to the membrane. It catalyses the reaction an N-acylsphing-4-enine + a 1,2-diacyl-sn-glycero-3-phosphocholine = a sphingomyelin + a 1,2-diacyl-sn-glycerol. It carries out the reaction an N-acyl-15-methylhexadecasphing-4-enine + a 1,2-diacyl-sn-glycero-3-phosphocholine = an N-acyl-15-methylhexadecasphing-4-enine-1-phosphocholine + a 1,2-diacyl-sn-glycerol. It participates in lipid metabolism; sphingolipid metabolism. Functionally, sphingomyelin synthases (SM synthase or SMS) synthesize the sphingolipid sphingomyelin (SM) through transfer of the phosphatidyl head group of 1,2-diacyl-sn-glycero-3-phosphocholine (phosphatidylcholine, PC) on to the primary hydroxyl of ceramide (N-acylsphingoid base), yielding 1,2-diacyl-sn-glycerol (diacylglycerol, DAG) as a side product. Functions as a bidirectional lipid cholinephosphotransferases capable of converting PC and ceramide to SM and DAG and vice versa depending on the respective levels of ceramide and DAG as phosphocholine acceptors, respectively. This is Phosphatidylcholine:ceramide cholinephosphotransferase 2 (sms-2) from Caenorhabditis elegans.